We begin with the raw amino-acid sequence, 280 residues long: 4-diphosphocytidyl-2-C-methyl-D-erythritol kinase (280 aa).

Lys8 is a catalytic residue. ATP is bound at residue 91-101; sequence PVSAGLAGGST. Asp133 is a catalytic residue.

It belongs to the GHMP kinase family. IspE subfamily.

The enzyme catalyses 4-CDP-2-C-methyl-D-erythritol + ATP = 4-CDP-2-C-methyl-D-erythritol 2-phosphate + ADP + H(+). It participates in isoprenoid biosynthesis; isopentenyl diphosphate biosynthesis via DXP pathway; isopentenyl diphosphate from 1-deoxy-D-xylulose 5-phosphate: step 3/6. Functionally, catalyzes the phosphorylation of the position 2 hydroxy group of 4-diphosphocytidyl-2C-methyl-D-erythritol. This chain is 4-diphosphocytidyl-2-C-methyl-D-erythritol kinase, found in Clostridium botulinum (strain Eklund 17B / Type B).